Consider the following 237-residue polypeptide: RNA chaperone ProQ (237 aa).

The disordered stretch occupies residues 106–188 (AKARVQAQRA…QPRPVPVTDI (83 aa)). Residues 146–158 (PRREAGAAPENRK) show a composition bias toward basic and acidic residues.

Belongs to the ProQ family.

Its subcellular location is the cytoplasm. RNA chaperone with significant RNA binding, RNA strand exchange and RNA duplexing activities. May regulate ProP activity through an RNA-based, post-transcriptional mechanism. The protein is RNA chaperone ProQ of Yersinia pseudotuberculosis serotype O:1b (strain IP 31758).